Consider the following 1308-residue polypeptide: Receptor tyrosine-protein kinase erbB-4 (1308 aa).

Positions 1–25 (MKLATGLWVWGSLLMAAGTVQPSAS) are cleaved as a signal peptide. Residues 26–652 (QSVCAGTENK…TLPQHARTPL (627 aa)) lie on the Extracellular side of the membrane. Cys-29 and Cys-56 are joined by a disulfide. Residues Asn-138, Asn-174, and Asn-181 are each glycosylated (N-linked (GlcNAc...) asparagine). 12 disulfides stabilise this stretch: Cys-156–Cys-186, Cys-189–Cys-197, Cys-193–Cys-205, Cys-213–Cys-221, Cys-217–Cys-229, Cys-230–Cys-238, Cys-234–Cys-246, Cys-249–Cys-258, Cys-262–Cys-289, Cys-293–Cys-304, Cys-308–Cys-323, and Cys-326–Cys-330. N-linked (GlcNAc...) asparagine glycosylation occurs at Asn-253. N-linked (GlcNAc...) asparagine glycans are attached at residues Asn-410, Asn-473, and Asn-495. Intrachain disulfides connect Cys-503–Cys-512, Cys-507–Cys-520, Cys-523–Cys-532, Cys-536–Cys-552, Cys-555–Cys-569, Cys-559–Cys-577, Cys-580–Cys-589, Cys-593–Cys-614, Cys-617–Cys-625, and Cys-621–Cys-633. The N-linked (GlcNAc...) asparagine glycan is linked to Asn-548. N-linked (GlcNAc...) asparagine glycosylation occurs at Asn-576. N-linked (GlcNAc...) asparagine glycosylation occurs at Asn-620. The hydrophobic stretch at 653–673 (IAAGVIGGLFILVIMALTFAV) threads the membrane. The Cytoplasmic portion of the chain corresponds to 674–1308 (YVRRKSIKKK…PPYRHRNTVV (635 aa)). The short motif at 676–684 (RRKSIKKKR) is the Nuclear localization signal element. The region spanning 718–985 (LKRVKVLGSG…RMARDPQRYL (268 aa)) is the Protein kinase domain. Residues 724 to 732 (LGSGAFGTV), Lys-751, 797 to 799 (QLM), and 843 to 848 (DLAARN) contribute to the ATP site. Asp-843 (proton acceptor) is an active-site residue. 3 positions are modified to phosphotyrosine; by autocatalysis: Tyr-875, Tyr-1035, and Tyr-1056. The PPxy motif 1 motif lies at 1032 to 1035 (PPIY). Residues 1117-1149 (PHVQEDSSTQRYSADPTVFAPERNPRGELDEEG) form a disordered region. 7 positions are modified to phosphotyrosine; by autocatalysis: Tyr-1150, Tyr-1162, Tyr-1188, Tyr-1202, Tyr-1242, Tyr-1258, and Tyr-1284. The PPxY motif 2 motif lies at 1282-1285 (PEYL). The PDZ-binding signature appears at 1290–1292 (LKP).

This sequence belongs to the protein kinase superfamily. Tyr protein kinase family. EGF receptor subfamily. Monomer in the absence of bound ligand. Homodimer or heterodimer with another ERBB family member upon ligand binding, thus forming heterotetramers. Interacts with EGFR and ERBB2. Interacts with DLG2 (via its PDZ domain), DLG3 (via its PDZ domain), DLG4 (via its PDZ domain) and SNTB2 (via its PDZ domain). Interacts with MUC1. Interacts (via its PPxy motifs) with WWOX. Interacts (via the PPxY motif 3 of isoform JM-A CYT-2) with YAP1 (via the WW domain 1 of isoform 1). Interacts (isoform JM-A CYT-1 and isoform JM-B CYT-1) with WWP1. Interacts (via its intracellular domain) with TRIM28. Interacts (via the intracellular domains of both CYT-1 and CYT-2 isoforms) with KAP1; the interaction does not phosphorylate KAP1 but represses ERBB4-mediated transcriptional activity. Interacts with PRPU, DDX23, MATR3, RBM15, ILF3, KAP1, U5S1, U2SURP, ITCH, HNRNPU, AP2A1, NULC, LEO1, WWP2, IGHG1, HXK1, GRB7 and SRRT. Interacts (phosphorylated isoform JM-A CYT-1 and isoform JM-B CYT-1) with PIK3R1. Interacts with SHC1. Interacts with GRB2. Interacts (soluble intracellular domain) with BCL2. Interacts (phosphorylated) with STAT1. Interacts with CBFA2T3. Interacts (soluble intracellular domain) with STAT5A. Isoform JM-A CYT-1 and isoform JM-A CYT-2 are processed by ADAM17. Proteolytic processing in response to ligand or 12-O-tetradecanoylphorbol-13-acetate stimulation results in the production of 120 kDa soluble receptor forms and intermediate membrane-anchored 80 kDa fragments (m80HER4), which are further processed by a presenilin-dependent gamma-secretase to release a cytoplasmic intracellular domain (E4ICD; E4ICD1/s80Cyt1 or E4ICD2/s80Cyt2, depending on the isoform). Membrane-anchored 80 kDa fragments of the processed isoform JM-A CYT-1 are more readily degraded by the proteasome than fragments of isoform JM-A CYT-2, suggesting a prevalence of E4ICD2 over E4ICD1. Isoform JM-B CYT-1 and isoform JM-B CYT-2 lack the ADAM17 cleavage site and are not processed by ADAM17, precluding further processing by gamma-secretase. In terms of processing, autophosphorylated on tyrosine residues in response to ligand binding. Autophosphorylation occurs in trans, i.e. one subunit of the dimeric receptor phosphorylates tyrosine residues on the other subunit. Ligands trigger phosphorylation at specific tyrosine residues, thereby creating binding sites for scaffold proteins and effectors. Constitutively phosphorylated at a basal level when overexpressed in heterologous systems; ligand binding leads to increased phosphorylation. Phosphorylation at Tyr-1035 is important for interaction with STAT1. Phosphorylation at Tyr-1056 is important for interaction with PIK3R1. Phosphorylation at Tyr-1242 is important for interaction with SHC1. Phosphorylation at Tyr-1188 may also contribute to the interaction with SHC1. Isoform JM-A CYT-2 is constitutively phosphorylated on tyrosine residues in a ligand-independent manner. E4ICD2 but not E4ICD1 is phosphorylated on tyrosine residues. Post-translationally, ubiquitinated. During mitosis, the ERBB4 intracellular domain is ubiquitinated by the APC/C complex and targeted to proteasomal degradation. Isoform JM-A CYT-1 and isoform JM-B CYT-1 are ubiquitinated by WWP1. The ERBB4 intracellular domain (E4ICD1) is ubiquitinated, and this involves NEDD4. As to expression, isoform JM-A CYT-2 and isoform JM-B CYT-2 are expressed in cerebellum, cerebral cortex, spinal cord, medulla oblongata and eye, but the kidney expresses solely isoform JM-A CYT-2 and the heart solely isoform JM-B CYT-2.

Its subcellular location is the cell membrane. It is found in the nucleus. The protein localises to the mitochondrion. The enzyme catalyses L-tyrosyl-[protein] + ATP = O-phospho-L-tyrosyl-[protein] + ADP + H(+). Binding of a cognate ligand leads to dimerization and activation by autophosphorylation on tyrosine residues. In vitro kinase activity is increased by Mg(2+). In terms of biological role, tyrosine-protein kinase that plays an essential role as cell surface receptor for neuregulins and EGF family members and regulates development of the heart, the central nervous system and the mammary gland, gene transcription, cell proliferation, differentiation, migration and apoptosis. Required for normal cardiac muscle differentiation during embryonic development, and for postnatal cardiomyocyte proliferation. Required for normal development of the embryonic central nervous system, especially for normal neural crest cell migration and normal axon guidance. Required for mammary gland differentiation, induction of milk proteins and lactation. Acts as cell-surface receptor for the neuregulins NRG1, NRG2, NRG3 and NRG4 and the EGF family members BTC, EREG and HBEGF. Ligand binding triggers receptor dimerization and autophosphorylation at specific tyrosine residues that then serve as binding sites for scaffold proteins and effectors. Ligand specificity and signaling is modulated by alternative splicing, proteolytic processing, and by the formation of heterodimers with other ERBB family members, thereby creating multiple combinations of intracellular phosphotyrosines that trigger ligand- and context-specific cellular responses. Mediates phosphorylation of SHC1 and activation of the MAP kinases MAPK1/ERK2 and MAPK3/ERK1. Isoform JM-A CYT-1 and isoform JM-B CYT-1 phosphorylate PIK3R1, leading to the activation of phosphatidylinositol 3-kinase and AKT1 and protect cells against apoptosis. Isoform JM-A CYT-1 and isoform JM-B CYT-1 mediate reorganization of the actin cytoskeleton and promote cell migration in response to NRG1. Isoform JM-A CYT-2 and isoform JM-B CYT-2 lack the phosphotyrosine that mediates interaction with PIK3R1, and hence do not phosphorylate PIK3R1, do not protect cells against apoptosis, and do not promote reorganization of the actin cytoskeleton and cell migration. Proteolytic processing of isoform JM-A CYT-1 and isoform JM-A CYT-2 gives rise to the corresponding soluble intracellular domains (4ICD) that translocate to the nucleus, promote nuclear import of STAT5A, activation of STAT5A, mammary epithelium differentiation, cell proliferation and activation of gene expression. The ERBB4 soluble intracellular domains (4ICD) colocalize with STAT5A at the CSN2 promoter to regulate transcription of milk proteins during lactation. The ERBB4 soluble intracellular domains can also translocate to mitochondria and promote apoptosis. This chain is Receptor tyrosine-protein kinase erbB-4 (Erbb4), found in Mus musculus (Mouse).